A 299-amino-acid chain; its full sequence is Putative arsenical pump-driving ATPase 2 (299 aa).

Residue 8 to 15 participates in ATP binding; the sequence is GKGGVGKT.

The protein belongs to the arsA ATPase family.

The catalysed reaction is arsenite(in) + ATP + H2O = arsenite(out) + ADP + phosphate + H(+). Its function is as follows. Anion-transporting ATPase. Catalyzes the extrusion of arsenite. This chain is Putative arsenical pump-driving ATPase 2 (arsA2), found in Aquifex aeolicus (strain VF5).